A 155-amino-acid chain; its full sequence is Small ribosomal subunit protein uS7c (155 aa).

This sequence belongs to the universal ribosomal protein uS7 family. As to quaternary structure, part of the 30S ribosomal subunit.

Its subcellular location is the plastid. The protein localises to the chloroplast. One of the primary rRNA binding proteins, it binds directly to 16S rRNA where it nucleates assembly of the head domain of the 30S subunit. The sequence is that of Small ribosomal subunit protein uS7c (rps7) from Physcomitrium patens (Spreading-leaved earth moss).